A 282-amino-acid chain; its full sequence is Complement component 1 Q subcomponent-binding protein, mitochondrial (282 aa).

The transit peptide at 1-70 (MLPLLRCVPR…PRGPCACGCG (70 aa)) directs the protein to the mitochondrion. The interval 76 to 93 (TEGDKAFVDFLNDEIKEE) is C1q binding. Lys91 is subject to N6-acetyllysine. The segment at 137-163 (NSIPPTFDGEEEPTQGQKVEEQEPELT) is disordered. Residues 168-213 (FVVEVIKNDDGKKALVLDCHYPEDEVGQEDEAESDIFSIREVSFQS) form an interaction with MAVS region. A Phosphotyrosine modification is found at Tyr188. Phosphoserine is present on residues Ser201 and Ser205.

This sequence belongs to the MAM33 family. Homotrimer; three monomers form a donut-shaped structure with an unusually asymmetric charge distribution on the surface. Interacts with CDK13, HRK, VTN, NFYB, ADRA1B, FOXC1, DDX21, DDX50, NCL, SRSF1 and SRSF9. Interacts with CD93; the association may represent a cell surface C1q receptor. Interacts with KRT1; the association represents a cell surface kininogen receptor. Interacts with CD209; the interaction is indicative for a C1q:C1QBP:CD209 signaling complex. Interacts with FBL and RRP1; the respective interactions with C1QBP are competitive. Probably associates with the mitoribosome. Interacts with MAVS; the interaction occurs upon viral transfection. Interacts with PPIF. Interacts with U2AF1L4. Interacts with PLEKHN1. Interacts with VGF-derived peptide TLQP-21. Interacts with MRE11 and RAD50; forming the MRC (MRE11-RAD50-C1QBP) complex that inhibits the activity of MRE11. In terms of assembly, (Microbial infection) Interacts with Rubella virus capsid protein; the interaction occurs in mitochondria. As to quaternary structure, (Microbial infection) Interacts with L.monocytogenes InlB.

The protein resides in the mitochondrion matrix. It localises to the nucleus. The protein localises to the cell membrane. Its subcellular location is the secreted. It is found in the cytoplasm. The protein resides in the nucleolus. In terms of biological role, multifunctional and multicompartmental protein involved in inflammation and infection processes, ribosome biogenesis, protein synthesis in mitochondria, regulation of apoptosis, transcriptional regulation and pre-mRNA splicing. At the cell surface is thought to act as an endothelial receptor for plasma proteins of the complement and kallikrein-kinin cascades. Putative receptor for C1q; specifically binds to the globular 'heads' of C1q thus inhibiting C1; may perform the receptor function through a complex with C1qR/CD93. In complex with cytokeratin-1/KRT1 is a high affinity receptor for kininogen-1/HMWK. Can also bind other plasma proteins, such as coagulation factor XII leading to its autoactivation. May function to bind initially fluid kininogen-1 to the cell membrane. The secreted form may enhance both extrinsic and intrinsic coagulation pathways. It is postulated that the cell surface form requires docking with transmembrane proteins for downstream signaling which might be specific for a cell-type or response. By acting as C1q receptor is involved in chemotaxis of immature dendritic cells and neutrophils and is proposed to signal through CD209/DC-SIGN on immature dendritic cells, through integrin alpha-4/beta-1 during trophoblast invasion of the decidua, and through integrin beta-1 during endothelial cell adhesion and spreading. Signaling involved in inhibition of innate immune response is implicating the PI3K-AKT/PKB pathway. Required for protein synthesis in mitochondria. In mitochondrial translation may be involved in formation of functional 55S mitoribosomes; the function seems to involve its RNA-binding activity. Acts as a RNA modification reader, which specifically recognizes and binds mitochondrial RNAs modified by C5-methylcytosine (m5C) in response to stress, and promotes recruitment of the mitochondrial degradosome complex, leading to their degradation. May be involved in the nucleolar ribosome maturation process; the function may involve the exchange of FBL for RRP1 in the association with pre-ribosome particles. Involved in regulation of RNA splicing by inhibiting the RNA-binding capacity of SRSF1 and its phosphorylation. Is required for the nuclear translocation of splicing factor U2AF1L4. Involved in regulation of CDKN2A- and HRK-mediated apoptosis. Stabilizes mitochondrial CDKN2A isoform smARF. May be involved in regulation of FOXC1 transcriptional activity and NFY/CCAAT-binding factor complex-mediated transcription. May play a role in antibacterial defense as it can bind to cell surface hyaluronan and inhibit Streptococcus pneumoniae hyaluronate lyase. May be involved in modulation of the immune response; ligation by HCV core protein is resulting in suppression of interleukin-12 production in monocyte-derived dendritic cells. Involved in regulation of antiviral response by inhibiting RIGI- and IFIH1-mediated signaling pathways probably involving its association with MAVS after viral infection. Acts as a regulator of DNA repair via homologous recombination by inhibiting the activity of MRE11: interacts with unphosphorylated MRE11 and RAD50 in absence of DNA damage, preventing formation and activity of the MRN complex. Following DNA damage, dissociates from phosphorylated MRE11, allowing formation of the MRN complex. Functionally, (Microbial infection) During bacterial infection processes acts as an attachment site for microbial proteins, including Listeria monocytogenes internalin B (InlB). The polypeptide is Complement component 1 Q subcomponent-binding protein, mitochondrial (C1QBP) (Chlorocebus aethiops (Green monkey)).